The primary structure comprises 194 residues: A-type ATP synthase subunit E (194 aa).

It belongs to the V-ATPase E subunit family. Has multiple subunits with at least A(3), B(3), C, D, E, F, H, I and proteolipid K(x).

The protein localises to the cell membrane. Component of the A-type ATP synthase that produces ATP from ADP in the presence of a proton gradient across the membrane. The polypeptide is A-type ATP synthase subunit E (Saccharolobus islandicus (strain M.16.27) (Sulfolobus islandicus)).